Here is a 365-residue protein sequence, read N- to C-terminus: Histidinol-phosphate aminotransferase (365 aa).

N6-(pyridoxal phosphate)lysine is present on Lys220.

The protein belongs to the class-II pyridoxal-phosphate-dependent aminotransferase family. Histidinol-phosphate aminotransferase subfamily. In terms of assembly, homodimer. Requires pyridoxal 5'-phosphate as cofactor.

The enzyme catalyses L-histidinol phosphate + 2-oxoglutarate = 3-(imidazol-4-yl)-2-oxopropyl phosphate + L-glutamate. It functions in the pathway amino-acid biosynthesis; L-histidine biosynthesis; L-histidine from 5-phospho-alpha-D-ribose 1-diphosphate: step 7/9. In Neisseria meningitidis serogroup B (strain ATCC BAA-335 / MC58), this protein is Histidinol-phosphate aminotransferase.